The following is a 449-amino-acid chain: Cytochrome P450 2E1 (449 aa).

254-259 (FAGTET) is a substrate binding site. Cys393 is a heme binding site.

It belongs to the cytochrome P450 family. Interacts with chaperones HSP70 and HSP90; this interaction is required for initial targeting to mitochondria. It depends on heme as a cofactor.

It localises to the endoplasmic reticulum membrane. Its subcellular location is the microsome membrane. The protein localises to the mitochondrion inner membrane. It catalyses the reaction an organic molecule + reduced [NADPH--hemoprotein reductase] + O2 = an alcohol + oxidized [NADPH--hemoprotein reductase] + H2O + H(+). The catalysed reaction is (5Z,8Z,11Z)-eicosatrienoate + reduced [NADPH--hemoprotein reductase] + O2 = 19-hydroxy-(5Z,8Z,11Z)-eicosatrienoate + oxidized [NADPH--hemoprotein reductase] + H2O + H(+). The enzyme catalyses (5Z,8Z,11Z,14Z,17Z)-eicosapentaenoate + reduced [NADPH--hemoprotein reductase] + O2 = 19-hydroxy-(5Z,8Z,11Z,14Z,17Z)-eicosapentaenoate + oxidized [NADPH--hemoprotein reductase] + H2O + H(+). It carries out the reaction (4Z,7Z,10Z,13Z,16Z,19Z)-docosahexaenoate + reduced [NADPH--hemoprotein reductase] + O2 = 21-hydroxy-(4Z,7Z,10Z,13Z,16Z,19Z)-docosahexaenoate + oxidized [NADPH--hemoprotein reductase] + H2O + H(+). It catalyses the reaction dodecanoate + reduced [NADPH--hemoprotein reductase] + O2 = 11-hydroxydodecanoate + oxidized [NADPH--hemoprotein reductase] + H2O + H(+). The catalysed reaction is tetradecanoate + reduced [NADPH--hemoprotein reductase] + O2 = 13-hydroxytetradecanoate + oxidized [NADPH--hemoprotein reductase] + H2O + H(+). The enzyme catalyses 4-nitrophenol + NADPH + O2 + H(+) = 4-nitrocatechol + NADP(+) + H2O. Its pathway is lipid metabolism; fatty acid metabolism. With respect to regulation, the omega-1 hydroxylase activity is stimulated by cytochrome b5. In terms of biological role, a cytochrome P450 monooxygenase involved in the metabolism of fatty acids. Mechanistically, uses molecular oxygen inserting one oxygen atom into a substrate, and reducing the second into a water molecule, with two electrons provided by NADPH via cytochrome P450 reductase (NADPH--hemoprotein reductase). Catalyzes the hydroxylation of carbon-hydrogen bonds. Hydroxylates fatty acids specifically at the omega-1 position displaying the highest catalytic activity for saturated fatty acids. May be involved in the oxidative metabolism of xenobiotics. The chain is Cytochrome P450 2E1 (CYP2E1) from Macaca fascicularis (Crab-eating macaque).